An 84-amino-acid polypeptide reads, in one-letter code: Toxin BmKaTx16 (84 aa).

An N-terminal signal peptide occupies residues methionine 1–serine 19. In terms of domain architecture, LCN-type CS-alpha/beta spans arginine 21 to histidine 83. Disulfide bonds link cysteine 31-cysteine 82, cysteine 35-cysteine 55, cysteine 41-cysteine 65, and cysteine 45-cysteine 67. A propeptide (removed by a carboxypeptidase) is located at residue arginine 84.

Belongs to the long (4 C-C) scorpion toxin superfamily. Sodium channel inhibitor family. Alpha subfamily. Expressed by the venom gland.

It localises to the secreted. Alpha toxins bind voltage-independently at site-3 of sodium channels (Nav) and inhibit the inactivation of the activated channels, thereby blocking neuronal transmission. In Olivierus martensii (Manchurian scorpion), this protein is Toxin BmKaTx16.